A 165-amino-acid polypeptide reads, in one-letter code: Destrin (165 aa).

Ala2 carries the post-translational modification N-acetylalanine. The residue at position 3 (Ser3) is a Phosphoserine. The ADF-H domain occupies 4–153; it reads GVQVADEVCR…NRACIAEKLG (150 aa). Lys19 carries the post-translational modification N6-acetyllysine. A Nuclear localization signal motif is present at residues 30–34; the sequence is KKRKK.

The protein belongs to the actin-binding proteins ADF family. Post-translationally, ISGylated.

Its function is as follows. Actin-depolymerizing protein. Severs actin filaments (F-actin) and binds to actin monomers (G-actin). Acts in a pH-independent manner. This is Destrin (DSTN) from Bos taurus (Bovine).